Consider the following 930-residue polypeptide: Semaphorin-6C (930 aa).

Positions 1–24 (MPRAPHFMPLLLLLLLLSLPHTQA) are cleaved as a signal peptide. Over 25–604 (AFPQDPLPLL…ASASRSVPIP (580 aa)) the chain is Extracellular. The 487-residue stretch at 30 to 516 (PLPLLISDLQ…FSGCIVYLPL (487 aa)) folds into the Sema domain. An N-linked (GlcNAc...) asparagine glycan is attached at Asn-70. Intrachain disulfides connect Cys-111/Cys-121, Cys-139/Cys-148, Cys-262/Cys-373, and Cys-287/Cys-332. Residue Asn-286 is glycosylated (N-linked (GlcNAc...) asparagine). N-linked (GlcNAc...) asparagine glycosylation is present at Asn-437. Cystine bridges form between Cys-479–Cys-510, Cys-519–Cys-537, Cys-525–Cys-570, and Cys-529–Cys-545. Residues 554-593 (TDVDQAGNQESMEHGDCQDGATGSQSGPGDSAYGVRRDLP) form a disordered region. The helical transmembrane segment at 605–625 (LLLASVAAAFALGASVSGLLV) threads the bilayer. Residues 626–930 (SCACRRAHRR…AVPNGGRFNF (305 aa)) are Cytoplasmic-facing. Disordered stretches follow at residues 654–674 (LARL…GDAV), 716–761 (GDPW…PGQA), 775–882 (HGPQ…PGKH), and 908–930 (SLKP…RFNF). Positions 829–844 (ASAPARPALSAPAPRL) are enriched in low complexity.

This sequence belongs to the semaphorin family. As to expression, in adult tissues, expressed only in skeletal muscle.

It localises to the cell membrane. In terms of biological role, shows growth cone collapsing activity on dorsal root ganglion (DRG) neurons in vitro. May be a stop signal for the DRG neurons in their target areas, and possibly also for other neurons. May also be involved in the maintenance and remodeling of neuronal connections. This is Semaphorin-6C (SEMA6C) from Homo sapiens (Human).